The sequence spans 645 residues: Acetyl-coenzyme A synthetase (645 aa).

Residues 190 to 193 (RGSK), Thr-308, and Asn-332 contribute to the CoA site. ATP-binding positions include 384-386 (GEP), 408-413 (DTWWQT), Asp-497, and Arg-512. Ser-520 provides a ligand contact to CoA. Residue Arg-523 coordinates ATP. 3 residues coordinate Mg(2+): Val-534, His-536, and Val-539. Arg-581 contributes to the CoA binding site. Lys-606 bears the N6-acetyllysine mark.

This sequence belongs to the ATP-dependent AMP-binding enzyme family. Mg(2+) serves as cofactor. Acetylated. Deacetylation by the SIR2-homolog deacetylase activates the enzyme.

The catalysed reaction is acetate + ATP + CoA = acetyl-CoA + AMP + diphosphate. In terms of biological role, catalyzes the conversion of acetate into acetyl-CoA (AcCoA), an essential intermediate at the junction of anabolic and catabolic pathways. AcsA undergoes a two-step reaction. In the first half reaction, AcsA combines acetate with ATP to form acetyl-adenylate (AcAMP) intermediate. In the second half reaction, it can then transfer the acetyl group from AcAMP to the sulfhydryl group of CoA, forming the product AcCoA. This chain is Acetyl-coenzyme A synthetase, found in Bdellovibrio bacteriovorus (strain ATCC 15356 / DSM 50701 / NCIMB 9529 / HD100).